Here is a 290-residue protein sequence, read N- to C-terminus: ATP synthase gamma chain (290 aa).

The protein belongs to the ATPase gamma chain family. F-type ATPases have 2 components, CF(1) - the catalytic core - and CF(0) - the membrane proton channel. CF(1) has five subunits: alpha(3), beta(3), gamma(1), delta(1), epsilon(1). CF(0) has three main subunits: a, b and c.

The protein localises to the cell membrane. Produces ATP from ADP in the presence of a proton gradient across the membrane. The gamma chain is believed to be important in regulating ATPase activity and the flow of protons through the CF(0) complex. This Wolbachia sp. subsp. Brugia malayi (strain TRS) protein is ATP synthase gamma chain.